We begin with the raw amino-acid sequence, 760 residues long: Xaa-Pro dipeptidyl-peptidase (760 aa).

Active-site charge relay system residues include Ser349, Asp469, and His499.

Belongs to the peptidase S15 family. As to quaternary structure, homodimer.

Its subcellular location is the cytoplasm. The enzyme catalyses Hydrolyzes Xaa-Pro-|- bonds to release unblocked, N-terminal dipeptides from substrates including Ala-Pro-|-p-nitroanilide and (sequentially) Tyr-Pro-|-Phe-Pro-|-Gly-Pro-|-Ile.. Removes N-terminal dipeptides sequentially from polypeptides having unsubstituted N-termini provided that the penultimate residue is proline. This Streptococcus pyogenes serotype M4 (strain MGAS10750) protein is Xaa-Pro dipeptidyl-peptidase.